Reading from the N-terminus, the 247-residue chain is ATP synthase subunit a, chloroplastic (247 aa).

5 helical membrane-spanning segments follow: residues Q38–V58, V95–L115, I134–T154, L199–L219, and G220–G240.

The protein belongs to the ATPase A chain family. F-type ATPases have 2 components, CF(1) - the catalytic core - and CF(0) - the membrane proton channel. CF(1) has five subunits: alpha(3), beta(3), gamma(1), delta(1), epsilon(1). CF(0) has four main subunits: a, b, b' and c.

The protein resides in the plastid. The protein localises to the chloroplast thylakoid membrane. Key component of the proton channel; it plays a direct role in the translocation of protons across the membrane. This Morus indica (Mulberry) protein is ATP synthase subunit a, chloroplastic.